The chain runs to 657 residues: Leishmanolysin (657 aa).

Residues 1-41 (MSVDSSSSSTHRRRCVAARLVRLAAAGAAVTVAVGTAAAWA) form the signal peptide. Residues 42 to 102 (HAGALQHRCI…DPRPGSAPTV (61 aa)) constitute a propeptide, activation peptide. The Extracellular portion of the chain corresponds to 44 to 611 (GALQHRCIHD…DRMVGLATAA (568 aa)). The N-linked (GlcNAc...) asparagine glycan is linked to asparagine 107. 2 disulfide bridges follow: cysteine 127-cysteine 144 and cysteine 193-cysteine 232. Histidine 266 lines the Zn(2+) pocket. Glutamate 267 is a catalytic residue. Zn(2+) is bound at residue histidine 270. Asparagine 302 carries an N-linked (GlcNAc...) asparagine glycan. 7 disulfides stabilise this stretch: cysteine 316–cysteine 388, cysteine 395–cysteine 458, cysteine 408–cysteine 427, cysteine 417–cysteine 492, cysteine 469–cysteine 513, cysteine 518–cysteine 568, and cysteine 538–cysteine 561. Residue histidine 336 coordinates Zn(2+). N-linked (GlcNAc...) asparagine glycans are attached at residues asparagine 399, asparagine 409, asparagine 445, asparagine 466, and asparagine 501. Residues 612–632 (TVLLGMVLSLMALVVVWLLLV) traverse the membrane as a helical segment. Topologically, residues 633-657 (SCPWWCCKLGGPPASVTPACSPETE) are cytoplasmic.

Belongs to the peptidase M8 family. Zn(2+) serves as cofactor.

It is found in the membrane. It catalyses the reaction Preference for hydrophobic residues at P1 and P1' and basic residues at P2' and P3'. A model nonapeptide is cleaved at -Ala-Tyr-|-Leu-Lys-Lys-.. In terms of biological role, has an integral role during the infection of macrophages in the mammalian host. The polypeptide is Leishmanolysin (mspC) (Leishmania tropica).